We begin with the raw amino-acid sequence, 346 residues long: Secreted frizzled-related protein 4 (346 aa).

The N-terminal stretch at 1-18 (MFLSILVALCLWLHLALG) is a signal peptide. Residues 19–139 (VRGAPCEAVR…VYDRGVCISP (121 aa)) form the FZ domain. Disulfide bonds link Cys-24-Cys-85, Cys-32-Cys-78, Cys-69-Cys-108, Cys-97-Cys-136, and Cys-101-Cys-125. N-linked (GlcNAc...) asparagine glycosylation is found at Asn-38 and Asn-68. N-linked (GlcNAc...) asparagine glycosylation is found at Asn-116, Asn-194, and Asn-240. Residues 178–307 (CKCKKVKPTL…IQDKKKTAGR (130 aa)) enclose the NTR domain. Basic and acidic residues predominate over residues 294–303 (QRRTIQDKKK). The interval 294-346 (QRRTIQDKKKTAGRTSRSNPPKPKGKPPAPKPASPKKNIKTRSAQKKTNPKKV) is disordered. Residues 313-326 (PPKPKGKPPAPKPA) are compositionally biased toward pro residues. A compositionally biased stretch (basic residues) spans 330 to 346 (KNIKTRSAQKKTNPKKV).

It belongs to the secreted frizzled-related protein (sFRP) family.

It is found in the secreted. In terms of biological role, soluble frizzled-related proteins (sFRPS) function as modulators of Wnt signaling through direct interaction with Wnts. They have a role in regulating cell growth and differentiation in specific cell types. SFRP4 plays a role in bone morphogenesis. May also act as a regulator of adult uterine morphology and function. May also increase apoptosis during ovulation possibly through modulation of FZ1/FZ4/WNT4 signaling. Has phosphaturic effects by specifically inhibiting sodium-dependent phosphate uptake. The sequence is that of Secreted frizzled-related protein 4 (SFRP4) from Macaca mulatta (Rhesus macaque).